Reading from the N-terminus, the 298-residue chain is MTDLHTDVERYLRYLSVERQLSPITLLNYQRQLEAIINFASENGLQSWQQCDAAMVRNFAVRSRHKGLGAASLALRLSALRSFFDWLVSQNELKANPAKGVSAPKAPRHLPKNIDVDDMNRLLDIDINDPLAVRDRAMLEVMYGAGLRLSELVGLDIKHLDLESGEVWVMGKGSKERRLPIGRNAVAWIEHWLDLRDLFGSEDDALFLSKLGKRISARNVQKRFAEWGIKQGLNNHVHPHKLRHSFATHMLESSGDLRGVQELLGHANLSTTQIYTHLDFQHLASVYDAAHPRAKRGK.

In terms of domain architecture, Core-binding (CB) spans 2-88 (TDLHTDVERY…ALRSFFDWLV (87 aa)). Positions 109-288 (HLPKNIDVDD…DFQHLASVYD (180 aa)) constitute a Tyr recombinase domain. Active-site residues include Arg-148, Lys-172, His-240, Arg-243, and His-266. Tyr-275 (O-(3'-phospho-DNA)-tyrosine intermediate) is an active-site residue.

It belongs to the 'phage' integrase family. XerC subfamily. As to quaternary structure, forms a cyclic heterotetrameric complex composed of two molecules of XerC and two molecules of XerD, in which XerC interacts with XerD via its C-terminal region, XerD interacts with XerC via its C-terminal region and so on.

It is found in the cytoplasm. Its activity is regulated as follows. FtsK may regulate the catalytic switch between XerC and XerD in the heterotetrameric complex during the two steps of the recombination process. Site-specific tyrosine recombinase, which acts by catalyzing the cutting and rejoining of the recombining DNA molecules. Binds cooperatively to specific DNA consensus sequences that are separated from XerD binding sites by a short central region, forming the heterotetrameric XerC-XerD complex that recombines DNA substrates. The complex is essential to convert dimers of the bacterial chromosome into monomers to permit their segregation at cell division. It also contributes to the segregational stability of plasmids. In the complex XerC specifically exchanges the top DNA strands. The chain is Tyrosine recombinase XerC from Shigella flexneri serotype 5b (strain 8401).